Here is a 685-residue protein sequence, read N- to C-terminus: Linoleate 9/13-lipoxygenase (685 aa).

The N-terminal stretch at 1–19 is a signal peptide; the sequence is MKRRSVLLSGVALSGTALA. The Lipoxygenase domain maps to 122 to 685; the sequence is ASLPASAAAQ…PSRIPASTNI (564 aa). The Fe cation site is built by His377, His382, His555, Asn559, and Ile685.

Belongs to the lipoxygenase family. In terms of assembly, monomer. Requires Fe cation as cofactor.

The protein resides in the periplasm. The catalysed reaction is (9Z,12Z)-octadecadienoate + O2 = (9S)-hydroperoxy-(10E,12Z)-octadecadienoate. It carries out the reaction (9Z)-octadecenoate + O2 = (8E,10S)-10-hydroperoxy-octadeca-8-enoate. It catalyses the reaction (9Z,12Z)-octadecadienoate + O2 = (8E,10S,12Z)-10-hydroperoxyoctadeca-8,12-dienoate. The enzyme catalyses (9Z,12Z,15Z)-octadecatrienoate + O2 = (8E,10S,12Z,15Z)-10-hydroperoxyoctadeca-8,12,15-trienoate. The catalysed reaction is (9Z,12Z)-octadecadienoate + O2 = (13S)-hydroperoxy-(9Z,11E)-octadecadienoate. It carries out the reaction (9Z,12Z,15Z)-octadecatrienoate + O2 = (13S)-hydroperoxy-(9Z,11E,15Z)-octadecatrienoate. Inhibited by Ba(2+), Zn(2+) and Fe(3+). Functionally, in presence of oxygen, converts linoleate into (9S)-hydroperoxy-10,12-octadecenoate (9HPOD), which spontaneously decomposes to the corresponding 9-hydroxy-10,12-octadecenoate (9HOD), and into 13-hydroperoxy-9,11-octadecenoate (13HPOD) which spontaneously decomposes to the corresponding 13-hydroxy-9,11-octadecenoate (13HOD). Also active on linolenate. To a lesser extent, is also able to convert oleate into (10S)-hydroperoxy-8E-octadecenoate, which spontaneously decomposes to the corresponding 10-hydroxy-8E-octadecenoate. Is almost not active on arachidonate. This is Linoleate 9/13-lipoxygenase (lox) from Pseudomonas aeruginosa.